A 322-amino-acid chain; its full sequence is Phosphatidylserine decarboxylase proenzyme (322 aa).

Catalysis depends on charge relay system; for autoendoproteolytic cleavage activity residues aspartate 90, histidine 147, and serine 254. Serine 254 acts as the Schiff-base intermediate with substrate; via pyruvic acid; for decarboxylase activity in catalysis. At serine 254 the chain carries Pyruvic acid (Ser); by autocatalysis. Positions 290 to 322 (FVTPDSEPAPLPAEEIEAEHDASPLVDDKKDQV) are disordered. Residues 308–322 (EHDASPLVDDKKDQV) are compositionally biased toward basic and acidic residues.

Belongs to the phosphatidylserine decarboxylase family. PSD-B subfamily. Prokaryotic type I sub-subfamily. As to quaternary structure, heterodimer of a large membrane-associated beta subunit and a small pyruvoyl-containing alpha subunit. It depends on pyruvate as a cofactor. Is synthesized initially as an inactive proenzyme. Formation of the active enzyme involves a self-maturation process in which the active site pyruvoyl group is generated from an internal serine residue via an autocatalytic post-translational modification. Two non-identical subunits are generated from the proenzyme in this reaction, and the pyruvate is formed at the N-terminus of the alpha chain, which is derived from the carboxyl end of the proenzyme. The autoendoproteolytic cleavage occurs by a canonical serine protease mechanism, in which the side chain hydroxyl group of the serine supplies its oxygen atom to form the C-terminus of the beta chain, while the remainder of the serine residue undergoes an oxidative deamination to produce ammonia and the pyruvoyl prosthetic group on the alpha chain. During this reaction, the Ser that is part of the protease active site of the proenzyme becomes the pyruvoyl prosthetic group, which constitutes an essential element of the active site of the mature decarboxylase.

The protein localises to the cell membrane. The catalysed reaction is a 1,2-diacyl-sn-glycero-3-phospho-L-serine + H(+) = a 1,2-diacyl-sn-glycero-3-phosphoethanolamine + CO2. Its pathway is phospholipid metabolism; phosphatidylethanolamine biosynthesis; phosphatidylethanolamine from CDP-diacylglycerol: step 2/2. Its function is as follows. Catalyzes the formation of phosphatidylethanolamine (PtdEtn) from phosphatidylserine (PtdSer). The polypeptide is Phosphatidylserine decarboxylase proenzyme (Escherichia fergusonii (strain ATCC 35469 / DSM 13698 / CCUG 18766 / IAM 14443 / JCM 21226 / LMG 7866 / NBRC 102419 / NCTC 12128 / CDC 0568-73)).